The primary structure comprises 784 residues: SWI/SNF complex subunit SWI3C homolog (784 aa).

Polar residues predominate over residues 1-10 (MPRKASSTSD). The segment at 1–68 (MPRKASSTSD…PEDADDETLA (68 aa)) is disordered. Low complexity predominate over residues 24-39 (ASPSPSNRSSAAAAAA). The segment covering 43 to 66 (DDSDSAAVNEDDDSAVPEDADDET) has biased composition (acidic residues). Residues 185–284 (HVVPKHSDWF…YLASGSVHRG (100 aa)) form the SWIRM domain. Residues 355-409 (LSESSCSYCLQPLTSLHYQSLKEADIALCSDCFHDARYITGHSSLDFQRIDGDND) form a ZZ-type; degenerate zinc finger. Cysteine 360, cysteine 363, cysteine 383, and cysteine 386 together coordinate Zn(2+). In terms of domain architecture, SANT spans 413-464 (NDGDSWTDQETLLLLEGIEKYNDNWNNIAEHVGTKSKAQCIYHFIRLPVEDG). Disordered regions lie at residues 667–702 (LASP…SMPQ) and 760–784 (GMPN…SSVG). The span at 675–695 (PGGSTSTMSSNPMSMSPRPMG) shows a compositional bias: low complexity.

As to quaternary structure, interacts with LFR. Interacts with NMCP1.

Its subcellular location is the nucleus. The protein resides in the nucleoplasm. Component of a multiprotein complex equivalent of the SWI/SNF complex, an ATP-dependent chromatin-remodeling complex, which is required for the positive and negative regulation of gene expression of a large number of genes. It changes chromatin structure by altering DNA-histone contacts within a nucleosome, leading eventually to a change in nucleosome position, thus facilitating or repressing binding of gene-specific transcription factors. May be involved in positive response to drought stress and modulation of root growth through its interaction with NMCP1. This chain is SWI/SNF complex subunit SWI3C homolog, found in Oryza sativa subsp. japonica (Rice).